The primary structure comprises 209 residues: MGKVVVMDHPLIQHKIGIMRRTDTGSKDFRTLVSEVAMLECYEATRDLELTDVEIETPICKATVKELKGKKLAVVPILRAGLGMVEGMLELIPAAKVGHIGMYRDPETAEPIEYYCKLPADCANREVFVVDPMLATGGSAVAALDMLKKRGVKNIHFMCIIAAPEGVKRLTEAHPDVDVYIGALDDHLNEHKYIVPGLGDAGDRIFGTK.

5-phospho-alpha-D-ribose 1-diphosphate-binding positions include R79, R104, and D131 to S139. Residues I194 and G199–A201 contribute to the uracil site. Position 200 (D200) interacts with 5-phospho-alpha-D-ribose 1-diphosphate.

The protein belongs to the UPRTase family. Mg(2+) serves as cofactor.

It catalyses the reaction UMP + diphosphate = 5-phospho-alpha-D-ribose 1-diphosphate + uracil. Its pathway is pyrimidine metabolism; UMP biosynthesis via salvage pathway; UMP from uracil: step 1/1. Its activity is regulated as follows. Allosterically activated by GTP. Its function is as follows. Catalyzes the conversion of uracil and 5-phospho-alpha-D-ribose 1-diphosphate (PRPP) to UMP and diphosphate. The chain is Uracil phosphoribosyltransferase from Agathobacter rectalis (strain ATCC 33656 / DSM 3377 / JCM 17463 / KCTC 5835 / VPI 0990) (Eubacterium rectale).